We begin with the raw amino-acid sequence, 58 residues long: Large ribosomal subunit protein bL32 (58 aa).

The disordered stretch occupies residues 1–24 (MAVPKKKTSKSKRDKRKATWKRKA).

This sequence belongs to the bacterial ribosomal protein bL32 family.

This chain is Large ribosomal subunit protein bL32, found in Synechococcus sp. (strain ATCC 27144 / PCC 6301 / SAUG 1402/1) (Anacystis nidulans).